Consider the following 312-residue polypeptide: DNA-directed RNA polymerase subunit alpha (312 aa).

The segment at 1–226 (MIEFEKPIIT…EHLNLFTDLT (226 aa)) is alpha N-terminal domain (alpha-NTD). An alpha C-terminal domain (alpha-CTD) region spans residues 243-312 (DEKVLDRTIE…DLGLGLKNDK (70 aa)).

The protein belongs to the RNA polymerase alpha chain family. As to quaternary structure, homodimer. The RNAP catalytic core consists of 2 alpha, 1 beta, 1 beta' and 1 omega subunit. When a sigma factor is associated with the core the holoenzyme is formed, which can initiate transcription.

It carries out the reaction RNA(n) + a ribonucleoside 5'-triphosphate = RNA(n+1) + diphosphate. Its function is as follows. DNA-dependent RNA polymerase catalyzes the transcription of DNA into RNA using the four ribonucleoside triphosphates as substrates. The sequence is that of DNA-directed RNA polymerase subunit alpha from Streptococcus agalactiae serotype III (strain NEM316).